Here is a 51-residue protein sequence, read N- to C-terminus: rpoE leader peptide (51 aa).

A short protein whose stop codon overlaps with the start codon of downstream rpoE; a premature stop codon at position 12 results in decreased expression of ECF sigma factor RpoE, thus they are translationally coupled. This is rpoE leader peptide from Escherichia coli (strain K12).